Reading from the N-terminus, the 536-residue chain is Protein GvpD1 (536 aa).

39–46 (GAPGTGKT) serves as a coordination point for ATP. A disordered region spans residues 352–413 (GPSDSADRYD…SDQPHPIDED (62 aa)). Residues 363–372 (PDSTESFSEM) are compositionally biased toward polar residues. Residues 373–385 (ATTTPPDDAPTAT) show a composition bias toward low complexity. Basic and acidic residues predominate over residues 386-396 (HETDGADDGSR).

Belongs to the gas vesicle GvpD family. In terms of assembly, interacts with GvpE.

The protein localises to the cytoplasm. In terms of biological role, causes a decrease in the amount of GvpE protein. The 5'-region of its promoter or mRNA has a repressive function on downstream genes. Gas vesicles are hollow, gas filled proteinaceous nanostructures found in several microbial planktonic microorganisms. They allow positioning of halobacteria at the optimal depth for growth in the poorly aerated, shallow brine pools of their habitat. Functionally, expression of a 9.5 kb p-vac DNA fragment containing 2 divergently transcribed regions (gvpD-gvpE-gvpF-gvpG-gvpH-gvpI-gvpJ-gvpK-gvpL-gvpM and gvpA-gvpC-gvpN-gvpO) allows H.volcanii to produce gas vesicles. A similar region restores gas vesicle production in H.halobium without the p-vac locus, but it still has the c-vac locus. The chain is Protein GvpD1 (gvpD11) from Halobacterium salinarum (strain ATCC 700922 / JCM 11081 / NRC-1) (Halobacterium halobium).